Here is a 243-residue protein sequence, read N- to C-terminus: Triosephosphate isomerase (243 aa).

N9–K11 provides a ligand contact to substrate. The active-site Electrophile is H96. E165 serves as the catalytic Proton acceptor. Residues G171, S204, and G225–G226 each bind substrate.

This sequence belongs to the triosephosphate isomerase family. As to quaternary structure, homodimer.

It localises to the cytoplasm. The enzyme catalyses D-glyceraldehyde 3-phosphate = dihydroxyacetone phosphate. Its pathway is carbohydrate biosynthesis; gluconeogenesis. It participates in carbohydrate degradation; glycolysis; D-glyceraldehyde 3-phosphate from glycerone phosphate: step 1/1. Involved in the gluconeogenesis. Catalyzes stereospecifically the conversion of dihydroxyacetone phosphate (DHAP) to D-glyceraldehyde-3-phosphate (G3P). The chain is Triosephosphate isomerase from Synechococcus sp. (strain CC9902).